The chain runs to 369 residues: MADREEALREFVAVTGAEEERARFFLESAGWDLQIALASFYEDGGDEDILTLPQPTPSSVSRGTAASDHRVTSFRDLVHAQEDDDEEEEGQRFYAGGSERSGQQIVGPPRKKSPNELVEDLFKGAKEHGAVAVDRTAKSSGESSKPKPFAGGGYRLGATPEEESAYVAGERRHNSVQDVHVVLKLWKTGFSLDSGELRSYQDPSNAQFLDDIRRGEVPAELRRLARGGQVNLDMEDHRDEEYVKPKSVFKAFTGEGQKLGSTAPQVLSTSSPAQQAENEAKASSAIAIDESEPVTNIQIRLADGGRLVQKFNHNHRIRDIRLFIVDARPAMAATSFVLMTTFPNKELTDENQTLKEANLLNAVIVQRLT.

2 disordered regions span residues 46 to 115 (DEDI…KSPN) and 133 to 156 (VDRT…GYRL). Over residues 67 to 81 (SDHRVTSFRDLVHAQ) the composition is skewed to basic and acidic residues. The Nuclear localization signal signature appears at 109–115 (PRKKSPN). Positions 172–175 (RHNS) match the Nuclear localization signal motif. The SEP domain maps to 178–243 (DVHVVLKLWK…MEDHRDEEYV (66 aa)). Residues 260–277 (GSTAPQVLSTSSPAQQAE) show a composition bias toward polar residues. The disordered stretch occupies residues 260-280 (GSTAPQVLSTSSPAQQAENEA). Residues 291–367 (SEPVTNIQIR…NLLNAVIVQR (77 aa)) enclose the UBX domain.

Belongs to the NSFL1C family.

It is found in the nucleus. It localises to the golgi apparatus. Its subcellular location is the golgi stack. The protein resides in the cytoplasm. The protein localises to the cytoskeleton. It is found in the microtubule organizing center. It localises to the centrosome. Functionally, reduces the ATPase activity of VCP. Necessary for the fragmentation of Golgi stacks during mitosis and for VCP-mediated reassembly of Golgi stacks after mitosis. May play a role in VCP-mediated formation of transitional endoplasmic reticulum (tER). Inhibits the activity of CTSL (in vitro). Together with UBXN2B/p37, regulates the centrosomal levels of kinase AURKA/Aurora A levels during mitotic progression by promoting AURKA removal from centrosomes in prophase. Also, regulates spindle orientation during mitosis. The polypeptide is NSFL1 cofactor p47 (NSFL1C) (Gallus gallus (Chicken)).